A 213-amino-acid chain; its full sequence is Nicolin-1 (213 aa).

As to quaternary structure, part of the neuronal tubulin polyglutamylase complex which contains TPGS1, TPGS2, TTLL1, LRRC49 and NICN1.

The protein localises to the nucleus. This Canis lupus familiaris (Dog) protein is Nicolin-1 (NICN1).